The following is a 270-amino-acid chain: tRNA (guanine-N(1)-)-methyltransferase (270 aa).

Residues Gly-119 and 139 to 144 (IGDYVI) contribute to the S-adenosyl-L-methionine site.

The protein belongs to the RNA methyltransferase TrmD family. Homodimer.

The protein resides in the cytoplasm. The catalysed reaction is guanosine(37) in tRNA + S-adenosyl-L-methionine = N(1)-methylguanosine(37) in tRNA + S-adenosyl-L-homocysteine + H(+). In terms of biological role, specifically methylates guanosine-37 in various tRNAs. This chain is tRNA (guanine-N(1)-)-methyltransferase, found in Nitrosomonas europaea (strain ATCC 19718 / CIP 103999 / KCTC 2705 / NBRC 14298).